Here is a 287-residue protein sequence, read N- to C-terminus: Phosphatidylserine decarboxylase proenzyme (287 aa).

Active-site charge relay system; for autoendoproteolytic cleavage activity residues include Asp90, His147, and Ser252. The active-site Schiff-base intermediate with substrate; via pyruvic acid; for decarboxylase activity is the Ser252. Ser252 is subject to Pyruvic acid (Ser); by autocatalysis.

It belongs to the phosphatidylserine decarboxylase family. PSD-B subfamily. Prokaryotic type I sub-subfamily. In terms of assembly, heterodimer of a large membrane-associated beta subunit and a small pyruvoyl-containing alpha subunit. The cofactor is pyruvate. Is synthesized initially as an inactive proenzyme. Formation of the active enzyme involves a self-maturation process in which the active site pyruvoyl group is generated from an internal serine residue via an autocatalytic post-translational modification. Two non-identical subunits are generated from the proenzyme in this reaction, and the pyruvate is formed at the N-terminus of the alpha chain, which is derived from the carboxyl end of the proenzyme. The autoendoproteolytic cleavage occurs by a canonical serine protease mechanism, in which the side chain hydroxyl group of the serine supplies its oxygen atom to form the C-terminus of the beta chain, while the remainder of the serine residue undergoes an oxidative deamination to produce ammonia and the pyruvoyl prosthetic group on the alpha chain. During this reaction, the Ser that is part of the protease active site of the proenzyme becomes the pyruvoyl prosthetic group, which constitutes an essential element of the active site of the mature decarboxylase.

The protein resides in the cell membrane. The enzyme catalyses a 1,2-diacyl-sn-glycero-3-phospho-L-serine + H(+) = a 1,2-diacyl-sn-glycero-3-phosphoethanolamine + CO2. It functions in the pathway phospholipid metabolism; phosphatidylethanolamine biosynthesis; phosphatidylethanolamine from CDP-diacylglycerol: step 2/2. Its function is as follows. Catalyzes the formation of phosphatidylethanolamine (PtdEtn) from phosphatidylserine (PtdSer). In Pseudomonas putida (strain W619), this protein is Phosphatidylserine decarboxylase proenzyme.